An 84-amino-acid chain; its full sequence is Exodeoxyribonuclease 7 small subunit (84 aa).

The protein belongs to the XseB family. Heterooligomer composed of large and small subunits.

It localises to the cytoplasm. The catalysed reaction is Exonucleolytic cleavage in either 5'- to 3'- or 3'- to 5'-direction to yield nucleoside 5'-phosphates.. In terms of biological role, bidirectionally degrades single-stranded DNA into large acid-insoluble oligonucleotides, which are then degraded further into small acid-soluble oligonucleotides. This is Exodeoxyribonuclease 7 small subunit from Yersinia pseudotuberculosis serotype O:1b (strain IP 31758).